A 124-amino-acid polypeptide reads, in one-letter code: Holo-[acyl-carrier-protein] synthase (124 aa).

Mg(2+) contacts are provided by Asp5 and Glu56.

This sequence belongs to the P-Pant transferase superfamily. AcpS family. The cofactor is Mg(2+).

It is found in the cytoplasm. The enzyme catalyses apo-[ACP] + CoA = holo-[ACP] + adenosine 3',5'-bisphosphate + H(+). Its function is as follows. Transfers the 4'-phosphopantetheine moiety from coenzyme A to a Ser of acyl-carrier-protein. The polypeptide is Holo-[acyl-carrier-protein] synthase (Campylobacter hominis (strain ATCC BAA-381 / DSM 21671 / CCUG 45161 / LMG 19568 / NCTC 13146 / CH001A)).